Reading from the N-terminus, the 225-residue chain is Gene 30 protein (225 aa).

Residues 48-73 (RNSELGHPEVKKEETTQQPEKGEGMA) form a disordered region. Residues 51–73 (ELGHPEVKKEETTQQPEKGEGMA) are compositionally biased toward basic and acidic residues.

Its function is as follows. Essential for DNA synthesis. The sequence is that of Gene 30 protein (30) from Bacillus phage SP01 (Bacteriophage SP01).